The chain runs to 337 residues: Casein kinase I isoform alpha-like (337 aa).

Lys8 is subject to N6-acetyllysine. A Protein kinase domain is found at Tyr17 to Phe285. ATP is bound by residues Ile23–Val31 and Lys46. Asp136 (proton acceptor) is an active-site residue. Over residues Ala309 to Lys325 the composition is skewed to low complexity. Positions Ala309–Asn337 are disordered. The span at Gln326–Asn337 shows a compositional bias: basic and acidic residues.

It belongs to the protein kinase superfamily. CK1 Ser/Thr protein kinase family. Casein kinase I subfamily. Interacts with FAM83A, FAM83B, FAM83C, FAM83D, FAM83E, FAM83F, FAM83G and FAM83H (via DUF1669).

Its subcellular location is the cytoplasm. The enzyme catalyses L-seryl-[protein] + ATP = O-phospho-L-seryl-[protein] + ADP + H(+). It carries out the reaction L-threonyl-[protein] + ATP = O-phospho-L-threonyl-[protein] + ADP + H(+). Casein kinases are operationally defined by their preferential utilization of acidic proteins such as caseins as substrates. It can phosphorylate a large number of proteins. Participates in Wnt signaling. The chain is Casein kinase I isoform alpha-like (CSNK1A1L) from Homo sapiens (Human).